The primary structure comprises 382 residues: uncharacterized protein (382 aa).

Helical transmembrane passes span 14–34 (GLLLLTLAIAVLNTLVPLWLA), 45–65 (VVSSSYFTGNLVGTLLTGYVI), 79–99 (FIFAAGCAGLGLMIGFWSWLA), 102–122 (FVAGIGCAMIWVVVESALMCS), 131–151 (LLAAYMMVYYVGTFLGQLLVS), 157–177 (LMSVLPWVTGLTLAGILPLLF), 204–224 (LGVNGCIISGIVLGSLYGLMP), 235–255 (ASIGFWMAVLVSAGILGQWPI), 270–290 (VQVFVVILGSIAMLSQAAMAP), 291–311 (ALFILGAAGFTLYPVAMAWAC), 325–345 (ALLLSYTVGSLLGPSFTAMLM), and 348–368 (FSDNLLFIMIASVSFIYLLML).

This sequence belongs to the major facilitator superfamily. YcaD (TC 2.A.1.26) family.

Its subcellular location is the cell inner membrane. This is an uncharacterized protein from Escherichia coli O45:K1 (strain S88 / ExPEC).